A 205-amino-acid polypeptide reads, in one-letter code: Holliday junction branch migration complex subunit RuvA (205 aa).

Positions 1 to 64 are domain I; that stretch reads MIGRLSGILV…EDAQLLYGFI (64 aa). Residues 65-143 are domain II; that stretch reads TKQERALFRL…SLLEASAGSE (79 aa). The segment at 144–156 is flexible linker; it reads REFMLQSNYTPAA. The domain III stretch occupies residues 157 to 205; sequence AVDSAEEDAISALLSLGYKPAQASKSVSAAFKEGMSSETLIKAALKSML.

Belongs to the RuvA family. In terms of assembly, homotetramer. Forms an RuvA(8)-RuvB(12)-Holliday junction (HJ) complex. HJ DNA is sandwiched between 2 RuvA tetramers; dsDNA enters through RuvA and exits via RuvB. An RuvB hexamer assembles on each DNA strand where it exits the tetramer. Each RuvB hexamer is contacted by two RuvA subunits (via domain III) on 2 adjacent RuvB subunits; this complex drives branch migration. In the full resolvosome a probable DNA-RuvA(4)-RuvB(12)-RuvC(2) complex forms which resolves the HJ.

It is found in the cytoplasm. Its function is as follows. The RuvA-RuvB-RuvC complex processes Holliday junction (HJ) DNA during genetic recombination and DNA repair, while the RuvA-RuvB complex plays an important role in the rescue of blocked DNA replication forks via replication fork reversal (RFR). RuvA specifically binds to HJ cruciform DNA, conferring on it an open structure. The RuvB hexamer acts as an ATP-dependent pump, pulling dsDNA into and through the RuvAB complex. HJ branch migration allows RuvC to scan DNA until it finds its consensus sequence, where it cleaves and resolves the cruciform DNA. This is Holliday junction branch migration complex subunit RuvA from Shewanella frigidimarina (strain NCIMB 400).